A 436-amino-acid polypeptide reads, in one-letter code: Transcription factor MYB124 (436 aa).

Positions 1–11 (MEDTKKKKKKN) are enriched in basic residues. The segment at 1-23 (MEDTKKKKKKNINNNQDSKKKER) is disordered. Residues 8 to 15 (KKKNINNN) carry the Nuclear localization signal 1 motif. HTH myb-type domains are found at residues 20 to 71 (KKER…YTYL) and 72 to 126 (NSDF…KKRA). DNA-binding regions (H-T-H motif) lie at residues 48–71 (WAIIASKFKDKSTRQCRRRWYTYL) and 99–122 (WTEIAKVVSGRTDNAVKNRFTTLC). Positions 151–158 (PRKSENET) match the Nuclear localization signal 2 motif. Residues 309–328 (SWRQPDLHDSPASSEYSSGS) form a disordered region. The segment covering 319–328 (PASSEYSSGS) has biased composition (polar residues).

In terms of assembly, interacts with RBR1. As to expression, expressed in all shoot organs with higher levels in leaves, stems, flowers, siliques and floral buds. Also detected in roots tips.

It is found in the nucleus. Functionally, transcription factor that binds to DNA in promoters cis-regulatory element 5'-GGCGCGC-3' of cell cycle genes, including cyclins, cyclin-dependent kinases (CDKs), and components of the pre-replication complex. Binds to DNA in promoters cis-regulatory element 5'-AGCCG-3' of auxin regulated genes (e.g. PIN3 and PIN7). Together with FAMA and MYB88, ensures that stomata contain just two guard cells (GCs) by enforcing a single symmetric precursor cell division before stomatal maturity. Represses the expression of the mitosis-inducing factors CDKB1-1 and CDKA-1, specifically required for the last guard mother cells (GMC) symmetric divisions in the stomatal pathway. Represses CYCA2-3 in newly formed guard cells. Together with MYB88, regulates stomata spacing by restricting divisions late in the stomatal cell lineage thus limiting the number of GMC divisions. In collaboration with CDKB1-1 and CDKB1-2, restrict the G1/S transition and chloroplast and nuclear number during stomatal formation, and normally maintain fate and developmental progression throughout the stomatal cell lineage. Also involved in the shape regulation of pavement cells. Involved in sensing and/or transducing abiotic stress (e.g. drought and salt), probably via the positive regulation of NAC019. Regulates female reproduction being required for entry into megasporogenesis, probably via the regulation of cell cycle genes. Promotes histone H3K27me3 marks and represses stem cell gene expression. Required for lateral roots (LRs) initiation via the regulation of PIN3 expression in an auxin-dependent manner. Involved in responses to gravity stimulation in primary roots by regulating the transcription of PIN3 and PIN7 in gravity-sensing cells, thus modulating auxin asymmetric redistribution. In Arabidopsis thaliana (Mouse-ear cress), this protein is Transcription factor MYB124.